We begin with the raw amino-acid sequence, 152 residues long: MFDILVYLFENYYTPQACPAADVLAKRLAAAGFEHEDIDDALGWLYGLAETTERCVELAQAPASGFRVYTDAEYQQLGSASIGFITFLESAGVLPAPLREIVIDRALASPEAPVSLSKIKIIALMVLWSQEAEIDNLVLEELLDDEEARRLH.

This sequence belongs to the Smg family.

This chain is Protein Smg homolog, found in Bordetella avium (strain 197N).